We begin with the raw amino-acid sequence, 232 residues long: Ribonuclease P protein component 3 (232 aa).

Belongs to the eukaryotic/archaeal RNase P protein component 3 family. Consists of a catalytic RNA component and at least 5 protein subunits.

It is found in the cytoplasm. It carries out the reaction Endonucleolytic cleavage of RNA, removing 5'-extranucleotides from tRNA precursor.. Its function is as follows. Part of ribonuclease P, a protein complex that generates mature tRNA molecules by cleaving their 5'-ends. The polypeptide is Ribonuclease P protein component 3 (Methanococcus maripaludis (strain DSM 14266 / JCM 13030 / NBRC 101832 / S2 / LL)).